The chain runs to 39 residues: Histone H2A (39 aa).

Positions alanine 1–serine 18 are enriched in basic residues. Positions alanine 1–glutamine 24 are disordered. Residue lysine 5 is modified to N6-(2-hydroxyisobutyryl)lysine. Lysine 5 bears the N6-acetyllysine mark. Residue lysine 9 is modified to N6-(2-hydroxyisobutyryl)lysine; alternate. Lysine 9 carries the N6-lactoyllysine; alternate modification. Lysine 9 bears the N6-succinyllysine mark. Residues lysine 13 and lysine 15 each participate in a glycyl lysine isopeptide (Lys-Gly) (interchain with G-Cter in ubiquitin) cross-link. Lysine 36 carries the post-translational modification N6-(2-hydroxyisobutyryl)lysine; alternate.

Belongs to the histone H2A family. In terms of assembly, the nucleosome is a histone octamer containing two molecules each of H2A, H2B, H3 and H4 assembled in one H3-H4 heterotetramer and two H2A-H2B heterodimers. The octamer wraps approximately 147 bp of DNA. In terms of processing, monoubiquitination of C-terminus gives a specific tag for epigenetic transcriptional repression. Following DNA double-strand breaks (DSBs), it is ubiquitinated through 'Lys-63' linkage of ubiquitin moieties.

It localises to the nucleus. Its subcellular location is the chromosome. Its function is as follows. Core component of nucleosome. Nucleosomes wrap and compact DNA into chromatin, limiting DNA accessibility to the cellular machineries which require DNA as a template. Histones thereby play a central role in transcription regulation, DNA repair, DNA replication and chromosomal stability. DNA accessibility is regulated via a complex set of post-translational modifications of histones, also called histone code, and nucleosome remodeling. Buforins are strong antimicrobial activities in vitro against a broad-spectrum of microorganisms including fungi. Buforin II is more potent than buforin I. The chain is Histone H2A from Bufo gargarizans (Asian toad).